The following is a 113-amino-acid chain: Putative pterin-4-alpha-carbinolamine dehydratase (113 aa).

Belongs to the pterin-4-alpha-carbinolamine dehydratase family.

The catalysed reaction is (4aS,6R)-4a-hydroxy-L-erythro-5,6,7,8-tetrahydrobiopterin = (6R)-L-erythro-6,7-dihydrobiopterin + H2O. This Idiomarina loihiensis (strain ATCC BAA-735 / DSM 15497 / L2-TR) protein is Putative pterin-4-alpha-carbinolamine dehydratase.